The following is a 360-amino-acid chain: Glutamate 5-kinase (360 aa).

Lysine 7 contributes to the ATP binding site. Serine 47, aspartate 134, and asparagine 146 together coordinate substrate. ATP-binding positions include 166–167 (TD) and 210–216 (TGGITTK). In terms of domain architecture, PUA spans 275-348 (VGQITLDEGA…LNKKENINSS (74 aa)).

The protein belongs to the glutamate 5-kinase family.

Its subcellular location is the cytoplasm. It catalyses the reaction L-glutamate + ATP = L-glutamyl 5-phosphate + ADP. The protein operates within amino-acid biosynthesis; L-proline biosynthesis; L-glutamate 5-semialdehyde from L-glutamate: step 1/2. Functionally, catalyzes the transfer of a phosphate group to glutamate to form L-glutamate 5-phosphate. This is Glutamate 5-kinase from Prochlorococcus marinus subsp. pastoris (strain CCMP1986 / NIES-2087 / MED4).